Here is a 917-residue protein sequence, read N- to C-terminus: Protein translocase subunit SecA (917 aa).

ATP contacts are provided by residues glutamine 87, 105-109 (GEGKT), and aspartate 513. Residues 834 to 917 (EEQMNEMEKR…YKSCHGKLTG (84 aa)) are disordered. Basic and acidic residues predominate over residues 839-852 (EMEKRRQEEAERQR). The span at 862–876 (APSQLAAPATPATPE) shows a compositional bias: low complexity. Cysteine 900, cysteine 902, cysteine 911, and histidine 912 together coordinate Zn(2+).

This sequence belongs to the SecA family. In terms of assembly, monomer and homodimer. Part of the essential Sec protein translocation apparatus which comprises SecA, SecYEG and auxiliary proteins SecDF-YajC and YidC. Zn(2+) serves as cofactor.

It is found in the cell inner membrane. Its subcellular location is the cytoplasm. It catalyses the reaction ATP + H2O + cellular proteinSide 1 = ADP + phosphate + cellular proteinSide 2.. In terms of biological role, part of the Sec protein translocase complex. Interacts with the SecYEG preprotein conducting channel. Has a central role in coupling the hydrolysis of ATP to the transfer of proteins into and across the cell membrane, serving both as a receptor for the preprotein-SecB complex and as an ATP-driven molecular motor driving the stepwise translocation of polypeptide chains across the membrane. The protein is Protein translocase subunit SecA of Saccharophagus degradans (strain 2-40 / ATCC 43961 / DSM 17024).